A 540-amino-acid polypeptide reads, in one-letter code: Phenylalanine--tRNA ligase beta subunit (540 aa).

In terms of domain architecture, B5 spans 268–342 (LRHTSVPFSL…MAYGYDRFTL (75 aa)). Mg(2+) contacts are provided by Asp320, Asp326, Glu329, and Asp330.

This sequence belongs to the phenylalanyl-tRNA synthetase beta subunit family. Type 2 subfamily. Tetramer of two alpha and two beta subunits. It depends on Mg(2+) as a cofactor.

Its subcellular location is the cytoplasm. The enzyme catalyses tRNA(Phe) + L-phenylalanine + ATP = L-phenylalanyl-tRNA(Phe) + AMP + diphosphate + H(+). The protein is Phenylalanine--tRNA ligase beta subunit of Metallosphaera sedula (strain ATCC 51363 / DSM 5348 / JCM 9185 / NBRC 15509 / TH2).